The primary structure comprises 352 residues: Phosphate acyltransferase (352 aa).

It belongs to the PlsX family. In terms of assembly, homodimer. Probably interacts with PlsY.

Its subcellular location is the cytoplasm. The catalysed reaction is a fatty acyl-[ACP] + phosphate = an acyl phosphate + holo-[ACP]. It functions in the pathway lipid metabolism; phospholipid metabolism. Its function is as follows. Catalyzes the reversible formation of acyl-phosphate (acyl-PO(4)) from acyl-[acyl-carrier-protein] (acyl-ACP). This enzyme utilizes acyl-ACP as fatty acyl donor, but not acyl-CoA. This chain is Phosphate acyltransferase, found in Bordetella bronchiseptica (strain ATCC BAA-588 / NCTC 13252 / RB50) (Alcaligenes bronchisepticus).